A 169-amino-acid chain; its full sequence is Lipoprotein signal peptidase (169 aa).

Residues 1 to 9 (MPDVDRFGR) lie on the Cytoplasmic side of the membrane. Residues 10-30 (LPWLWITVLVFVLDQVSKAFF) traverse the membrane as a helical segment. Over 31–67 (QAELSMYQQIVVIPDLFSWTLAYNTGAAFSFLADSSG) the chain is Periplasmic. The chain crosses the membrane as a helical span at residues 68–89 (WQRWLFALIAIVVSASLVVWLK). At 90-96 (RLKKGET) the chain is on the cytoplasmic side. The chain crosses the membrane as a helical span at residues 97 to 118 (WLAIALALVLGGALGNLYDRMV). Residues 119-140 (LGHVVDFILVHWQNRWYFPAFN) lie on the Periplasmic side of the membrane. Active-site residues include D124 and D143. The helical transmembrane segment at 141–154 (LADSAITVGAVMLA) threads the bilayer. Residues 155 to 169 (LDMFRSKKSGEAAHG) are Cytoplasmic-facing.

The protein belongs to the peptidase A8 family. As to quaternary structure, monomer in the crystal.

The protein resides in the cell inner membrane. It catalyses the reaction Release of signal peptides from bacterial membrane prolipoproteins. Hydrolyzes -Xaa-Yaa-Zaa-|-(S,diacylglyceryl)Cys-, in which Xaa is hydrophobic (preferably Leu), and Yaa (Ala or Ser) and Zaa (Gly or Ala) have small, neutral side chains.. It functions in the pathway protein modification; lipoprotein biosynthesis (signal peptide cleavage). With respect to regulation, inhibited by globomycin. In terms of biological role, this protein specifically catalyzes the removal of signal peptides from prolipoproteins. This is Lipoprotein signal peptidase from Pseudomonas aeruginosa (strain ATCC 15692 / DSM 22644 / CIP 104116 / JCM 14847 / LMG 12228 / 1C / PRS 101 / PAO1).